A 358-amino-acid chain; its full sequence is 3-isopropylmalate dehydrogenase (358 aa).

75–88 (GPKWETLPPEKQPE) is an NAD(+) binding site. Substrate contacts are provided by Arg-96, Arg-106, Arg-135, and Asp-225. Asp-225, Asp-249, and Asp-253 together coordinate Mg(2+). 283–295 (GSAPDIAGKGVAN) lines the NAD(+) pocket.

It belongs to the isocitrate and isopropylmalate dehydrogenases family. LeuB type 1 subfamily. As to quaternary structure, homodimer. Requires Mg(2+) as cofactor. Mn(2+) serves as cofactor.

It is found in the cytoplasm. The enzyme catalyses (2R,3S)-3-isopropylmalate + NAD(+) = 4-methyl-2-oxopentanoate + CO2 + NADH. The protein operates within amino-acid biosynthesis; L-leucine biosynthesis; L-leucine from 3-methyl-2-oxobutanoate: step 3/4. Catalyzes the oxidation of 3-carboxy-2-hydroxy-4-methylpentanoate (3-isopropylmalate) to 3-carboxy-4-methyl-2-oxopentanoate. The product decarboxylates to 4-methyl-2 oxopentanoate. The chain is 3-isopropylmalate dehydrogenase from Leptospira interrogans serogroup Icterohaemorrhagiae serovar copenhageni (strain Fiocruz L1-130).